The chain runs to 277 residues: Shikimate dehydrogenase (NADP(+)) (277 aa).

Residues 15 to 17 (SLS) and Thr-62 contribute to the shikimate site. The Proton acceptor role is filled by Lys-66. Shikimate contacts are provided by Asn-87 and Asp-102. NADP(+) contacts are provided by residues 127-131 (GAGGA), 151-156 (NRTVDK), and Ile-219. Tyr-221 provides a ligand contact to shikimate. Position 242 (Gly-242) interacts with NADP(+).

The protein belongs to the shikimate dehydrogenase family. As to quaternary structure, homodimer.

It catalyses the reaction shikimate + NADP(+) = 3-dehydroshikimate + NADPH + H(+). It functions in the pathway metabolic intermediate biosynthesis; chorismate biosynthesis; chorismate from D-erythrose 4-phosphate and phosphoenolpyruvate: step 4/7. In terms of biological role, involved in the biosynthesis of the chorismate, which leads to the biosynthesis of aromatic amino acids. Catalyzes the reversible NADPH linked reduction of 3-dehydroshikimate (DHSA) to yield shikimate (SA). The protein is Shikimate dehydrogenase (NADP(+)) of Bacillus cereus (strain G9842).